Reading from the N-terminus, the 387-residue chain is MKSRRQNVSVARQTILGRDENFEPIPIDLVIEIFSRSPVKSIARCRCVSKLWASILRLPYFTELYLTKSCARPRLLFACQKHRELFFFSTPQPHNPNESSSPLAASFHMKIPFDGRFNIISPIGGLVFVRYEQILKGRKTPEFVSAICNPSTGQSLTLPKPKTRKRIWGTSHFGYDPIEKQFKVLSMNIGDGVYKEHYVLTLGTENLSWRRIECSIPHVHGSKGICINGVLYYRAKADMFSGTLMIVCFDVRFEKFSYIKILKPTTTLISYNGKLASLVWEGPSYICGKRFEMWVLGDPEKHEWLKHTYELRPRWQNVLGEDLLIFAGMTGTNEIVLSPKYPSHPFYVFYYNLERNTIRRVEIQGMGAFKVNEDYIFLDHVEDVKLI.

Residues Asp19–Leu64 form the F-box domain.

Part of a SCF (ASK-cullin-F-box) protein ligase complex. Interacts with ASK14 and CUL1. Strongly expressed in guard cells. Mostly represented in seedlings, leaves and flowers, and, to a lower extent, in roots and siliques.

Its pathway is protein modification; protein ubiquitination. Component of SCF(ASK-cullin-F-box) E3 ubiquitin ligase complexes, which may mediate the ubiquitination and subsequent proteasomal degradation of target proteins. Negative regulator of guard cell abscisic acid (ABA) signaling, especially during drought stress. The protein is F-box protein DOR (DOR) of Arabidopsis thaliana (Mouse-ear cress).